The following is a 394-amino-acid chain: uncharacterized protein (394 aa).

The next 11 membrane-spanning stretches (helical) occupy residues 10-30 (PALI…NYYA), 50-70 (FIVT…VPLG), 79-99 (IVSM…SQSL), 100-120 (AMMI…QILV), 138-158 (TIMS…GLLA), 166-186 (VFWV…RGLP), 218-238 (LLGC…AFLL), 243-263 (FNYS…GALG), 291-311 (WLAI…ILVL), 337-357 (LTAG…LISA), and 364-384 (GWAG…LVWW).

It belongs to the major facilitator superfamily.

The protein resides in the cell inner membrane. This is an uncharacterized protein from Escherichia coli O157:H7.